Here is a 424-residue protein sequence, read N- to C-terminus: Histidine--tRNA ligase (424 aa).

The protein belongs to the class-II aminoacyl-tRNA synthetase family. In terms of assembly, homodimer.

The protein localises to the cytoplasm. The enzyme catalyses tRNA(His) + L-histidine + ATP = L-histidyl-tRNA(His) + AMP + diphosphate + H(+). The chain is Histidine--tRNA ligase from Salmonella heidelberg (strain SL476).